The primary structure comprises 95 residues: Aspartyl/glutamyl-tRNA(Asn/Gln) amidotransferase subunit C (95 aa).

It belongs to the GatC family. Heterotrimer of A, B and C subunits.

The catalysed reaction is L-glutamyl-tRNA(Gln) + L-glutamine + ATP + H2O = L-glutaminyl-tRNA(Gln) + L-glutamate + ADP + phosphate + H(+). It carries out the reaction L-aspartyl-tRNA(Asn) + L-glutamine + ATP + H2O = L-asparaginyl-tRNA(Asn) + L-glutamate + ADP + phosphate + 2 H(+). Allows the formation of correctly charged Asn-tRNA(Asn) or Gln-tRNA(Gln) through the transamidation of misacylated Asp-tRNA(Asn) or Glu-tRNA(Gln) in organisms which lack either or both of asparaginyl-tRNA or glutaminyl-tRNA synthetases. The reaction takes place in the presence of glutamine and ATP through an activated phospho-Asp-tRNA(Asn) or phospho-Glu-tRNA(Gln). In Hyphomonas neptunium (strain ATCC 15444), this protein is Aspartyl/glutamyl-tRNA(Asn/Gln) amidotransferase subunit C.